A 197-amino-acid chain; its full sequence is MIGLNTAAIYILQTLGSLYLLIVLLRFILQLVRADFYNPLSQFIVRATKPLLNPLRRIIPGFGGIDLASLVLAILIQLVLMILILMLMGYGVGGFIMQLLIWSIIAVTSLFLKVFFFALIISVILSWVAPGSYNPGAQLVNQICEPLLMPFRKLLPNLGGLDLSPIFAFLALKLIDMLVINNLAAMTGMPQQLSIFL.

A run of 4 helical transmembrane segments spans residues 9–29 (IYILQTLGSLYLLIVLLRFIL), 67–87 (LASLVLAILIQLVLMILILML), 104–124 (IIAVTSLFLKVFFFALIISVI), and 160–180 (GLDLSPIFAFLALKLIDMLVI).

Belongs to the YggT family.

The protein localises to the cell membrane. This is an uncharacterized protein from Pseudomonas aeruginosa (strain ATCC 15692 / DSM 22644 / CIP 104116 / JCM 14847 / LMG 12228 / 1C / PRS 101 / PAO1).